The sequence spans 424 residues: Serine--tRNA ligase (424 aa).

Over residues 1 to 15 the composition is skewed to basic and acidic residues; that stretch reads MIDPKLLRTDPDAVR. The interval 1-27 is disordered; that stretch reads MIDPKLLRTDPDAVRRSQAARGEDSSV. An L-serine-binding site is contributed by 230 to 232; it reads TSE. Residues 261 to 263 and valine 277 contribute to the ATP site; that span reads RRE. Glutamate 284 serves as a coordination point for L-serine. 348–351 lines the ATP pocket; that stretch reads EITS. Threonine 382 serves as a coordination point for L-serine.

It belongs to the class-II aminoacyl-tRNA synthetase family. Type-1 seryl-tRNA synthetase subfamily. In terms of assembly, homodimer. The tRNA molecule binds across the dimer.

It localises to the cytoplasm. The catalysed reaction is tRNA(Ser) + L-serine + ATP = L-seryl-tRNA(Ser) + AMP + diphosphate + H(+). It catalyses the reaction tRNA(Sec) + L-serine + ATP = L-seryl-tRNA(Sec) + AMP + diphosphate + H(+). It participates in aminoacyl-tRNA biosynthesis; selenocysteinyl-tRNA(Sec) biosynthesis; L-seryl-tRNA(Sec) from L-serine and tRNA(Sec): step 1/1. Functionally, catalyzes the attachment of serine to tRNA(Ser). Is also able to aminoacylate tRNA(Sec) with serine, to form the misacylated tRNA L-seryl-tRNA(Sec), which will be further converted into selenocysteinyl-tRNA(Sec). The chain is Serine--tRNA ligase from Cutibacterium acnes (strain DSM 16379 / KPA171202) (Propionibacterium acnes).